We begin with the raw amino-acid sequence, 242 residues long: ATP synthase subunit a (242 aa).

Helical transmembrane passes span 29-49 (SAAY…LAFS), 84-104 (FVPV…FGMI), 114-134 (IIIT…VGFV), 140-160 (FLSL…MIII), 189-209 (VIAS…IPLM), and 210-230 (VILI…FTIL).

Belongs to the ATPase A chain family. F-type ATPases have 2 components, CF(1) - the catalytic core - and CF(0) - the membrane proton channel. CF(1) has five subunits: alpha(3), beta(3), gamma(1), delta(1), epsilon(1). CF(0) has three main subunits: a(1), b(2) and c(9-12). The alpha and beta chains form an alternating ring which encloses part of the gamma chain. CF(1) is attached to CF(0) by a central stalk formed by the gamma and epsilon chains, while a peripheral stalk is formed by the delta and b chains.

It localises to the cell inner membrane. Its function is as follows. Key component of the proton channel; it plays a direct role in the translocation of protons across the membrane. The protein is ATP synthase subunit a of Rickettsia bellii (strain OSU 85-389).